We begin with the raw amino-acid sequence, 353 residues long: S-adenosylmethionine:tRNA ribosyltransferase-isomerase (353 aa).

Belongs to the QueA family. In terms of assembly, monomer.

It is found in the cytoplasm. The enzyme catalyses 7-aminomethyl-7-carbaguanosine(34) in tRNA + S-adenosyl-L-methionine = epoxyqueuosine(34) in tRNA + adenine + L-methionine + 2 H(+). The protein operates within tRNA modification; tRNA-queuosine biosynthesis. In terms of biological role, transfers and isomerizes the ribose moiety from AdoMet to the 7-aminomethyl group of 7-deazaguanine (preQ1-tRNA) to give epoxyqueuosine (oQ-tRNA). The polypeptide is S-adenosylmethionine:tRNA ribosyltransferase-isomerase (Rickettsia bellii (strain RML369-C)).